A 42-amino-acid polypeptide reads, in one-letter code: Photosystem II reaction center protein J (42 aa).

A helical membrane pass occupies residues Ile-10 to Phe-30.

This sequence belongs to the PsbJ family. PSII is composed of 1 copy each of membrane proteins PsbA, PsbB, PsbC, PsbD, PsbE, PsbF, PsbH, PsbI, PsbJ, PsbK, PsbL, PsbM, PsbT, PsbX, PsbY, PsbZ, Psb30/Ycf12, at least 3 peripheral proteins of the oxygen-evolving complex and a large number of cofactors. It forms dimeric complexes.

Its subcellular location is the plastid. The protein resides in the chloroplast thylakoid membrane. Functionally, one of the components of the core complex of photosystem II (PSII). PSII is a light-driven water:plastoquinone oxidoreductase that uses light energy to abstract electrons from H(2)O, generating O(2) and a proton gradient subsequently used for ATP formation. It consists of a core antenna complex that captures photons, and an electron transfer chain that converts photonic excitation into a charge separation. This Chlamydomonas reinhardtii (Chlamydomonas smithii) protein is Photosystem II reaction center protein J.